The following is a 139-amino-acid chain: D-ribose pyranase (139 aa).

His20 functions as the Proton donor in the catalytic mechanism. Residues Asp28, His106, and 128-130 each bind substrate; that span reads YAN.

Belongs to the RbsD / FucU family. RbsD subfamily. As to quaternary structure, homodecamer.

It localises to the cytoplasm. It catalyses the reaction beta-D-ribopyranose = beta-D-ribofuranose. The protein operates within carbohydrate metabolism; D-ribose degradation; D-ribose 5-phosphate from beta-D-ribopyranose: step 1/2. In terms of biological role, catalyzes the interconversion of beta-pyran and beta-furan forms of D-ribose. This chain is D-ribose pyranase, found in Escherichia coli O127:H6 (strain E2348/69 / EPEC).